The primary structure comprises 104 residues: MLETLYKEALDRKNNPKEGSYTNYLFDKGLDKILKKVGEEATEVVIGAKNADKTEIANETADVLYHLAVMLVETGVSPEDVEAVLRARQGKQSNVHDRKEVTDY.

It belongs to the PRA-PH family.

The protein localises to the cytoplasm. It catalyses the reaction 1-(5-phospho-beta-D-ribosyl)-ATP + H2O = 1-(5-phospho-beta-D-ribosyl)-5'-AMP + diphosphate + H(+). Its pathway is amino-acid biosynthesis; L-histidine biosynthesis; L-histidine from 5-phospho-alpha-D-ribose 1-diphosphate: step 2/9. The protein is Phosphoribosyl-ATP pyrophosphatase of Streptococcus thermophilus (strain ATCC BAA-491 / LMD-9).